Reading from the N-terminus, the 458-residue chain is Cell death abnormality protein 8 (458 aa).

At 1–45 (MFLKKHKSKLLLVPRDEEQEDAGIVAVLTDRIPSVLLVRWFDLFC) the chain is on the cytoplasmic side. A helical membrane pass occupies residues 46–66 (FGFAMCSYALDFFSDIGIAIF). The Extracellular segment spans residues 67 to 77 (HFWAGRYLSGS). Residues 78–98 (LVLAFALLPSVIINIISMVWM) form a helical membrane-spanning segment. Over 99 to 123 (LDDEMHWKRRAHPRRTGTFELNQKR) the chain is Cytoplasmic. A helical membrane pass occupies residues 124-144 (FIPLSKMIVLCICQMGPLFWY). At 145-219 (YKALYYGWMF…YYQTGTYPYW (75 aa)) the chain is on the extracellular side. The chain crosses the membrane as a helical span at residues 220–240 (LYFQAASLLLSIISISWSVVV). The Cytoplasmic segment spans residues 241–274 (QNRSLRMIRDDKVNIWPHEAVLQFCWRFLTILAR). A run of 2 helical transmembrane segments spans residues 275–295 (IITL…LISV) and 296–316 (HLLV…DACT). Position 317 (histidine 317) is a topological domain, extracellular. A helical membrane pass occupies residues 318–338 (IEKLLLLINTFIHIFIPFNMV). The Cytoplasmic segment spans residues 339 to 353 (EGNTRWRYLTAYSVE). A helical transmembrane segment spans residues 354–374 (FIEMMLVCWLLPLSLNTFPYI). Topologically, residues 375-378 (EKVQ) are extracellular. The chain crosses the membrane as a helical span at residues 379–399 (VGVPISFIAGIAIMMMYYQFF). At 400–458 (HPNRRQLIVTQSQEDLSLNVQKSVETLTPKLESSLEISGEQNTSQDLVSELLLDVEHEN) the chain is on the cytoplasmic side.

This sequence belongs to the XK family. In terms of processing, cleavage by ced-3 activates ced-8 function in promoting phosphatidylserine exposure at the surface of apoptotic cells.

It is found in the cell membrane. It carries out the reaction a 1,2-diacyl-sn-glycero-3-phospho-L-serine(in) = a 1,2-diacyl-sn-glycero-3-phospho-L-serine(out). Functionally, phospholipid scramblase that acts downstream of ced-9 and caspase ced-3 to promote phosphatidylserine exposure on apoptotic cell surface. Phosphatidylserine is a specific marker only present at the surface of apoptotic cells and acts as a specific signal for engulfment. Regulates apoptosis kinetics during embryonic development. Not required for engulfment of germ cell corpses. This is Cell death abnormality protein 8 from Caenorhabditis elegans.